Here is a 363-residue protein sequence, read N- to C-terminus: Peroxin-36 (363 aa).

The Cytoplasmic segment spans residues 1–193; sequence MSNLEKQIRL…ESFFINSFEQ (193 aa). 2 disordered regions span residues 71-114 and 128-157; these read QNHQ…DTST and TNSN…SKSG. Residues 97–114 show a composition bias toward low complexity; that stretch reads VDSNSDSSSSETLIDTST. The helical transmembrane segment at 194-213 threads the bilayer; that stretch reads LIALFDNFYFLSSLIGFNTS. Over 214-232 the chain is Peroxisomal; that stretch reads NSNSKITRLLRNFIKQASK. A helical transmembrane segment spans residues 233–250; it reads IWLVIIFLTVKNLFIRMI. Over 251–363 the chain is Cytoplasmic; the sequence is KLNRTEKKVK…SSDDIIDEYA (113 aa).

Its subcellular location is the peroxisome membrane. Controls peroxisome morphology and abundance under conditions of peroxisome proliferation such as oleate and methanol media. Has additional function(s), which is not present in its functional homologs such as Saccharomyces cerevisea PEX34 or human PEX16. In Komagataella phaffii (strain GS115 / ATCC 20864) (Yeast), this protein is Peroxin-36.